Reading from the N-terminus, the 179-residue chain is Large ribosomal subunit protein uL5 (179 aa).

It belongs to the universal ribosomal protein uL5 family. Part of the 50S ribosomal subunit; part of the 5S rRNA/L5/L18/L25 subcomplex. Contacts the 5S rRNA and the P site tRNA. Forms a bridge to the 30S subunit in the 70S ribosome.

This is one of the proteins that bind and probably mediate the attachment of the 5S RNA into the large ribosomal subunit, where it forms part of the central protuberance. In the 70S ribosome it contacts protein S13 of the 30S subunit (bridge B1b), connecting the 2 subunits; this bridge is implicated in subunit movement. Contacts the P site tRNA; the 5S rRNA and some of its associated proteins might help stabilize positioning of ribosome-bound tRNAs. The polypeptide is Large ribosomal subunit protein uL5 (Synechococcus sp. (strain RCC307)).